We begin with the raw amino-acid sequence, 212 residues long: Pyridoxine/pyridoxamine 5'-phosphate oxidase (212 aa).

Substrate is bound by residues 8–11 (RREY) and K66. FMN-binding positions include 61-66 (RIVLLK), 76-77 (FT), R82, K83, and Q105. Substrate-binding residues include Y123, R127, and S131. FMN is bound by residues 140 to 141 (QS) and W185. 191-193 (RLH) is a binding site for substrate. An FMN-binding site is contributed by R195.

Belongs to the pyridoxamine 5'-phosphate oxidase family. As to quaternary structure, homodimer. FMN serves as cofactor.

The catalysed reaction is pyridoxamine 5'-phosphate + O2 + H2O = pyridoxal 5'-phosphate + H2O2 + NH4(+). It catalyses the reaction pyridoxine 5'-phosphate + O2 = pyridoxal 5'-phosphate + H2O2. Its pathway is cofactor metabolism; pyridoxal 5'-phosphate salvage; pyridoxal 5'-phosphate from pyridoxamine 5'-phosphate: step 1/1. It functions in the pathway cofactor metabolism; pyridoxal 5'-phosphate salvage; pyridoxal 5'-phosphate from pyridoxine 5'-phosphate: step 1/1. Functionally, catalyzes the oxidation of either pyridoxine 5'-phosphate (PNP) or pyridoxamine 5'-phosphate (PMP) into pyridoxal 5'-phosphate (PLP). The chain is Pyridoxine/pyridoxamine 5'-phosphate oxidase from Shewanella pealeana (strain ATCC 700345 / ANG-SQ1).